The primary structure comprises 721 residues: Methionine--tRNA ligase (721 aa).

A 'HIGH' region motif is present at residues P27–H37. 4 residues coordinate Zn(2+): C158, C161, C171, and C174. The 'KMSKS' region signature appears at K348 to S352. K351 contacts ATP. One can recognise a tRNA-binding domain in the interval D615 to K721.

This sequence belongs to the class-I aminoacyl-tRNA synthetase family. MetG type 1 subfamily. In terms of assembly, homodimer. Zn(2+) is required as a cofactor.

Its subcellular location is the cytoplasm. It catalyses the reaction tRNA(Met) + L-methionine + ATP = L-methionyl-tRNA(Met) + AMP + diphosphate. Is required not only for elongation of protein synthesis but also for the initiation of all mRNA translation through initiator tRNA(fMet) aminoacylation. This chain is Methionine--tRNA ligase, found in Burkholderia vietnamiensis (strain G4 / LMG 22486) (Burkholderia cepacia (strain R1808)).